A 324-amino-acid chain; its full sequence is uncharacterized protein (324 aa).

This is an uncharacterized protein from Methanocaldococcus jannaschii (strain ATCC 43067 / DSM 2661 / JAL-1 / JCM 10045 / NBRC 100440) (Methanococcus jannaschii).